A 511-amino-acid polypeptide reads, in one-letter code: Cytochrome P450 4B1 (511 aa).

Heme-binding residues include Glu315 and Cys453.

This sequence belongs to the cytochrome P450 family. The cofactor is heme.

The protein resides in the endoplasmic reticulum membrane. Its subcellular location is the microsome membrane. It carries out the reaction an organic molecule + reduced [NADPH--hemoprotein reductase] + O2 = an alcohol + oxidized [NADPH--hemoprotein reductase] + H2O + H(+). Cytochromes P450 are a group of heme-thiolate monooxygenases. In liver microsomes, this enzyme is involved in an NADPH-dependent electron transport pathway. It oxidizes a variety of structurally unrelated compounds, including steroids, fatty acids, and xenobiotics. The sequence is that of Cytochrome P450 4B1 (Cyp4b1) from Rattus norvegicus (Rat).